Here is a 590-residue protein sequence, read N- to C-terminus: (+)-sabinene synthase, chloroplastic (590 aa).

Residues 1 to 51 constitute a chloroplast transit peptide; that stretch reads MSSISINIAMPLNSLHNFERKPSKAWSTSCTAPAARLRASSSLQQEKPHQI. Residues Asp343, Asp347, Asp487, Thr491, and Glu495 each contribute to the Mg(2+) site. The DDXXD motif motif lies at 343–347; sequence DDVYD.

This sequence belongs to the terpene synthase family. As to quaternary structure, monomer. It depends on Mg(2+) as a cofactor.

The protein resides in the plastid. It is found in the chloroplast. The catalysed reaction is (2E)-geranyl diphosphate = (1R,5R)-sabinene + diphosphate. It functions in the pathway terpene metabolism; sabinene hydrate biosynthesis. Catalyzes the formation of the (-)-3-isothujone precursor sabinene from geranyl diphosphate. The enzyme also produces significant amounts of gamma-terpinene, terpinolene and limonene. The chain is (+)-sabinene synthase, chloroplastic from Salvia officinalis (Sage).